A 247-amino-acid polypeptide reads, in one-letter code: Cytochrome c oxidase subunit 2 (247 aa).

Topologically, residues 1-38 (MREMMMNNMLNDVPTPWAMYFQDSATPNMEGMMELHNN) are mitochondrial intermembrane. A helical transmembrane segment spans residues 39 to 55 (VLFYLCVMLGFVTYMLY). The Mitochondrial matrix segment spans residues 56–86 (NVMTVYNKSAMAYKYMNHGQFMEMMWTTFPA). Residues 87–103 (MMLLMMAFPSFMLLYMC) traverse the membrane as a helical segment. The Mitochondrial intermembrane segment spans residues 104–247 (DEVMAPAMTI…VDFLAWIDEQ (144 aa)). The Cu cation site is built by H182, C217, E219, C221, H225, and M228. Residue E219 coordinates Mg(2+).

It belongs to the cytochrome c oxidase subunit 2 family. In terms of assembly, component of the cytochrome c oxidase (complex IV, CIV), a multisubunit enzyme composed of a catalytic core of 3 subunits and several supernumerary subunits. The complex exists as a monomer or a dimer and forms supercomplexes (SCs) in the inner mitochondrial membrane with ubiquinol-cytochrome c oxidoreductase (cytochrome b-c1 complex, complex III, CIII). Cu cation serves as cofactor.

It localises to the mitochondrion inner membrane. The enzyme catalyses 4 Fe(II)-[cytochrome c] + O2 + 8 H(+)(in) = 4 Fe(III)-[cytochrome c] + 2 H2O + 4 H(+)(out). In terms of biological role, component of the cytochrome c oxidase, the last enzyme in the mitochondrial electron transport chain which drives oxidative phosphorylation. The respiratory chain contains 3 multisubunit complexes succinate dehydrogenase (complex II, CII), ubiquinol-cytochrome c oxidoreductase (cytochrome b-c1 complex, complex III, CIII) and cytochrome c oxidase (complex IV, CIV), that cooperate to transfer electrons derived from NADH and succinate to molecular oxygen, creating an electrochemical gradient over the inner membrane that drives transmembrane transport and the ATP synthase. Cytochrome c oxidase is the component of the respiratory chain that catalyzes the reduction of oxygen to water. Electrons originating from reduced cytochrome c in the intermembrane space (IMS) are transferred via the dinuclear copper A center (CU(A)) of subunit 2 and heme A of subunit 1 to the active site in subunit 1, a binuclear center (BNC) formed by heme A3 and copper B (CU(B)). The BNC reduces molecular oxygen to 2 water molecules using 4 electrons from cytochrome c in the IMS and 4 protons from the mitochondrial matrix. This Eeniella nana (Yeast) protein is Cytochrome c oxidase subunit 2 (COX2).